The chain runs to 891 residues: DNA mismatch repair protein MutS (891 aa).

Gly-639–Ser-646 is a binding site for ATP. The disordered stretch occupies residues Thr-827 to Phe-854.

The protein belongs to the DNA mismatch repair MutS family.

This protein is involved in the repair of mismatches in DNA. It is possible that it carries out the mismatch recognition step. This protein has a weak ATPase activity. The chain is DNA mismatch repair protein MutS from Treponema denticola (strain ATCC 35405 / DSM 14222 / CIP 103919 / JCM 8153 / KCTC 15104).